We begin with the raw amino-acid sequence, 278 residues long: Phosphatidylglycerol--prolipoprotein diacylglyceryl transferase (278 aa).

A run of 4 helical transmembrane segments spans residues Trp-19–Gly-39, Phe-49–Val-69, Ile-83–Val-103, and Met-112–Ile-132. Arg-134 contributes to the a 1,2-diacyl-sn-glycero-3-phospho-(1'-sn-glycerol) binding site. Transmembrane regions (helical) follow at residues Gln-174 to Leu-194, Gly-204 to Met-224, and Ile-235 to Tyr-255.

The protein belongs to the Lgt family.

The protein resides in the cell membrane. The enzyme catalyses L-cysteinyl-[prolipoprotein] + a 1,2-diacyl-sn-glycero-3-phospho-(1'-sn-glycerol) = an S-1,2-diacyl-sn-glyceryl-L-cysteinyl-[prolipoprotein] + sn-glycerol 1-phosphate + H(+). It functions in the pathway protein modification; lipoprotein biosynthesis (diacylglyceryl transfer). Its function is as follows. Catalyzes the transfer of the diacylglyceryl group from phosphatidylglycerol to the sulfhydryl group of the N-terminal cysteine of a prolipoprotein, the first step in the formation of mature lipoproteins. This is Phosphatidylglycerol--prolipoprotein diacylglyceryl transferase from Lactobacillus gasseri (strain ATCC 33323 / DSM 20243 / BCRC 14619 / CIP 102991 / JCM 1131 / KCTC 3163 / NCIMB 11718 / NCTC 13722 / AM63).